The sequence spans 51 residues: Cuticle protein CP575 (51 aa).

Residues 1 to 51 (GDIIDVDNDLFEHEQDGVAGTSVHGEYEAYDAYGNEYEVKYIADHLGFRVL) form the Chitin-binding type R&amp;R domain.

In terms of tissue distribution, calcified shell.

In Cancer pagurus (Rock crab), this protein is Cuticle protein CP575.